The following is a 271-amino-acid chain: tRNA pseudouridine synthase A (271 aa).

Aspartate 52 serves as the catalytic Nucleophile. A substrate-binding site is contributed by tyrosine 110.

This sequence belongs to the tRNA pseudouridine synthase TruA family. In terms of assembly, homodimer.

The catalysed reaction is uridine(38/39/40) in tRNA = pseudouridine(38/39/40) in tRNA. Formation of pseudouridine at positions 38, 39 and 40 in the anticodon stem and loop of transfer RNAs. This chain is tRNA pseudouridine synthase A, found in Maridesulfovibrio salexigens (strain ATCC 14822 / DSM 2638 / NCIMB 8403 / VKM B-1763) (Desulfovibrio salexigens).